The sequence spans 1306 residues: Disease resistance protein Roq1 (1306 aa).

The region spanning 10 to 179 (RSYDVFLSFR…QILKDIFDKF (170 aa)) is the TIR domain. NAD(+) contacts are provided by residues 19–24 (RGEDTR) and G52. E86 is an active-site residue. The region spanning 198–417 (KKLSSLLRMD…IDRLKDNPEG (220 aa)) is the NB-ARC domain. LRR repeat units follow at residues 200 to 224 (LSSL…GVGK), 252 to 275 (LQHH…EFVD), 417 to 440 (GEIM…IFLD), 599 to 622 (PSKL…AKRL), 645 to 669 (ITNL…VGFL), 670 to 693 (KNLI…IQSE), 716 to 739 (MTHL…IEHL), 741 to 763 (SLEN…IWRF), 784 to 807 (SNCT…IGNL), 808 to 831 (TSLN…IWGL), 832 to 857 (TSLT…AINH), 878 to 902 (LDLL…IWML), 904 to 926 (FLRI…LGHL), 927 to 949 (EHLE…VARL), 961 to 983 (FAIG…VFGS), 987 to 1010 (LGSV…MNQL), 1013 to 1036 (LEYL…SIKE), and 1045 to 1070 (LRIM…EYQN).

It belongs to the disease resistance TIR-NB-LRR family. Homodimer.

It catalyses the reaction NAD(+) + H2O = ADP-D-ribose + nicotinamide + H(+). It carries out the reaction NAD(+) = 2'cADPR + nicotinamide + H(+). In terms of biological role, disease resistance (R) protein that specifically recognizes the Xanthomonas and Pseudomonas effector proteins XopQ and HopQ1, and triggers cell death. An NAD(+) hydrolase (NADase): in response to activation, catalyzes cleavage of NAD(+) into ADP-D-ribose (ADPR) and nicotinamide; NAD(+) cleavage triggers a defense system that promotes cell death. Makes small amounts of 2' cyclic ADPR (2'cADPR). The polypeptide is Disease resistance protein Roq1 (Nicotiana benthamiana).